The sequence spans 335 residues: NADH-quinone oxidoreductase subunit H (335 aa).

8 helical membrane passes run 15–35, 81–101, 114–134, 154–174, 187–207, 238–258, 270–290, and 307–327; these read VVKA…LSFV, MIFT…FSII, IGLL…LFAG, VSYE…VGSF, LWFI…GVAV, FFVG…TLFF, QVPF…FILL, and WKFC…IVLY.

The protein belongs to the complex I subunit 1 family. NDH-1 is composed of 13 different subunits. Subunits NuoA, H, J, K, L, M, N constitute the membrane sector of the complex.

The protein resides in the cell inner membrane. The enzyme catalyses a quinone + NADH + 5 H(+)(in) = a quinol + NAD(+) + 4 H(+)(out). Its function is as follows. NDH-1 shuttles electrons from NADH, via FMN and iron-sulfur (Fe-S) centers, to quinones in the respiratory chain. The immediate electron acceptor for the enzyme in this species is believed to be ubiquinone. Couples the redox reaction to proton translocation (for every two electrons transferred, four hydrogen ions are translocated across the cytoplasmic membrane), and thus conserves the redox energy in a proton gradient. This subunit may bind ubiquinone. The protein is NADH-quinone oxidoreductase subunit H of Pseudomonas putida (strain GB-1).